A 706-amino-acid chain; its full sequence is Polyribonucleotide nucleotidyltransferase (706 aa).

Asp486 and Asp492 together coordinate Mg(2+). One can recognise a KH domain in the interval 552-611 (PRIIAMKINPEKIRDVIGKGGAVIRALTEETGTQIDIQEDGSVKIACTSMEAGELAKKRI). One can recognise an S1 motif domain in the interval 621–689 (GKVYEGPVIK…EKGRLRLSMK (69 aa)).

It belongs to the polyribonucleotide nucleotidyltransferase family. It depends on Mg(2+) as a cofactor.

The protein localises to the cytoplasm. The enzyme catalyses RNA(n+1) + phosphate = RNA(n) + a ribonucleoside 5'-diphosphate. In terms of biological role, involved in mRNA degradation. Catalyzes the phosphorolysis of single-stranded polyribonucleotides processively in the 3'- to 5'-direction. This chain is Polyribonucleotide nucleotidyltransferase, found in Thiobacillus denitrificans (strain ATCC 25259 / T1).